The sequence spans 300 residues: Inosose dehydratase (300 aa).

This sequence belongs to the IolE/MocC family. The cofactor is glutathione. Requires Co(2+) as cofactor. It depends on Mn(2+) as a cofactor.

It catalyses the reaction scyllo-inosose = 3D-3,5/4-trihydroxycyclohexane-1,2-dione + H2O. The protein operates within polyol metabolism; myo-inositol degradation into acetyl-CoA; acetyl-CoA from myo-inositol: step 2/7. In terms of biological role, catalyzes the dehydration of inosose (2-keto-myo-inositol, 2KMI or 2,4,6/3,5-pentahydroxycyclohexanone) to 3D-(3,5/4)-trihydroxycyclohexane-1,2-dione (D-2,3-diketo-4-deoxy-epi-inositol). The polypeptide is Inosose dehydratase (Bacillus licheniformis (strain ATCC 14580 / DSM 13 / JCM 2505 / CCUG 7422 / NBRC 12200 / NCIMB 9375 / NCTC 10341 / NRRL NRS-1264 / Gibson 46)).